Here is an 876-residue protein sequence, read N- to C-terminus: Monofunctional isopimaradiene synthase, chloroplastic (876 aa).

Residues 1–64 (MAMPSYSSLS…YLRLGSRKII (64 aa)) constitute a chloroplast transit peptide. Mg(2+)-binding residues include Asp-628, Asp-632, Asn-772, Thr-776, and Glu-780. The short motif at 628–632 (DDLYD) is the DDXXD motif element.

It belongs to the terpene synthase family. Tpsd subfamily. Mg(2+) serves as cofactor.

It is found in the plastid. Its subcellular location is the chloroplast. It catalyses the reaction (+)-copalyl diphosphate = isopimara-7,15-diene + diphosphate. It participates in terpene metabolism; oleoresin biosynthesis. In terms of biological role, involved in defensive oleoresin formation in conifers in response to insect attack or other injury. Involved in diterpene (C20) olefins biosynthesis. Monofunctional enzyme lacking the DXDD motif in the class II active site relevant for the cyclization of geranylgeranyl diphosphate (GGPP). Requires (+)-copalyl diphosphate ((+)-CPP) as substrate, but no activity with GGPP or ent-CPP. Isopimaradiene is the major products of the enzyme followed by sandaracopimaradiene. In Pinus contorta (Shore pine), this protein is Monofunctional isopimaradiene synthase, chloroplastic.